A 547-amino-acid polypeptide reads, in one-letter code: Carboxypeptidase N subunit 2 (547 aa).

The N-terminal stretch at 1 to 21 (MFPGAWLCWVSLLLLARLTQP) is a signal peptide. An LRRNT domain is found at 22–49 (CPVGCDCFGREVFCSDEQLADIPPDIPP). N74, N111, and N119 each carry an N-linked (GlcNAc...) asparagine glycan. LRR repeat units follow at residues 98–119 (RLQDLEITGSPVSNLSAHIFSN), 122–143 (SLEKLTLDFDRLAGLPEDLFCH), 146–167 (ILESLQLQGNQLRTLPGRLFQS), 170–191 (DLRTLNLAQNLLTQLPKGAFQS), 194–215 (GLQMLKLSNNMLARLPEGALGS), 218–239 (SLQELFLDGNAITELSPHLFSQ), 242–263 (SLEMLWLQHNAICHLPVSLFSS), 266–287 (NLTFLSLKDNALRTLPEGLFAH), 290–311 (GLLHLSLSYNQLETIPEGAFTN), 314–335 (RLVSLTLSHNAITDLPEHVFRN), 338–359 (QLVKLSLDSNNLTALHPALFHN), and 362–383 (RLQLLNLSRNQLTTLPGGIFDT). Residues N266 and N311 are each glycosylated (N-linked (GlcNAc...) asparagine). N-linked (GlcNAc...) asparagine glycans are attached at residues N348, N359, and N367. The 53-residue stretch at 395–447 (NPWQCDCHLSYLTSWLRLYNNQISNTHTFCAGPAYLKGQLVPNLKQEQLICPV) folds into the LRRCT domain. N-linked (GlcNAc...) asparagine glycosylation is present at N520.

As to quaternary structure, tetramer of two catalytic chains and two glycosylated inactive chains.

The protein resides in the secreted. In terms of biological role, the 83 kDa subunit binds and stabilizes the catalytic subunit at 37 degrees Celsius and keeps it in circulation. Under some circumstances it may be an allosteric modifier of the catalytic subunit. This chain is Carboxypeptidase N subunit 2 (Cpn2), found in Mus musculus (Mouse).